Reading from the N-terminus, the 67-residue chain is Bombesin (67 aa).

Residues 1–30 (MSLLPAVKVLPLGYLGIVLVFSLILRSAMV) form the signal peptide. Residues 31-49 (DFIQDAGKLERIDTYKREA) constitute a propeptide that is removed on maturation. At Q50 the chain carries Pyrrolidone carboxylic acid. M64 carries the methionine amide modification.

It belongs to the bombesin/neuromedin-B/ranatensin family. As to expression, expressed by the skin dorsal glands.

It localises to the secreted. In terms of biological role, stimulates smooth muscle contraction in isolated rat stomach strip. The polypeptide is Bombesin (Sanguirana varians (Palawan frog)).